The chain runs to 285 residues: Chromatin modification-related protein YNG2 (285 aa).

Positions 19–54 (LEVKHLLQELKNKDVQLQEARKRYQTKDNQIHKFIR) form a coiled coil. The span at 138–165 (NGLSDNLSGTTTPRGHSASTPVADNAAN) shows a compositional bias: polar residues. Residues 138 to 218 (NGLSDNLSGT…SRPNEGPGNN (81 aa)) are disordered. The segment covering 193–207 (MKSEDFEDKKYDNDS) has biased composition (basic and acidic residues). The PHD-type zinc-finger motif lies at 225–276 (NLYCFCQRVSFGEMIGCDNDDCKFEWFHWSCVGITAPPKDDEIWYCPDCAPK). Zn(2+) contacts are provided by cysteine 228, cysteine 230, cysteine 241, cysteine 246, histidine 252, cysteine 255, cysteine 270, and cysteine 273.

It belongs to the ING family. As to quaternary structure, interacts with H3K4me3 and to a lesser extent with H3K4me2. Component of the NuA4 histone acetyltransferase complex.

Its subcellular location is the nucleus. Functionally, component of the NuA4 histone acetyltransferase complex which is involved in transcriptional activation of selected genes principally by acetylation of nucleosomal histone H4 and H2A. The NuA4 complex is also involved in DNA repair. Involved in cell cycle progression and meiosis. The protein is Chromatin modification-related protein YNG2 (YNG2) of Debaryomyces hansenii (strain ATCC 36239 / CBS 767 / BCRC 21394 / JCM 1990 / NBRC 0083 / IGC 2968) (Yeast).